Here is a 206-residue protein sequence, read N- to C-terminus: Probable N-acetyltransferase 14 (206 aa).

Positions 6–206 (LSVREMREDE…TLVREFSKDL (201 aa)) constitute an N-acetyltransferase domain. The chain crosses the membrane as a helical span at residues 57-77 (FVLASFALALLLPVFLAVAAV).

This sequence belongs to the camello family. In terms of tissue distribution, expressed in K-562 and HeLa cell lines and in brain.

Its subcellular location is the membrane. In terms of biological role, probable acetyltransferase. Functionally, may act as a transcription factor that regulates the expression of coproporphyrinogen oxidase by binding to a promoter regulatory element. This chain is Probable N-acetyltransferase 14 (NAT14), found in Homo sapiens (Human).